We begin with the raw amino-acid sequence, 371 residues long: Ferrochelatase (371 aa).

Fe cation is bound by residues histidine 218 and glutamate 299.

Belongs to the ferrochelatase family.

The protein localises to the cytoplasm. The catalysed reaction is heme b + 2 H(+) = protoporphyrin IX + Fe(2+). It functions in the pathway porphyrin-containing compound metabolism; protoheme biosynthesis; protoheme from protoporphyrin-IX: step 1/1. Catalyzes the ferrous insertion into protoporphyrin IX. The sequence is that of Ferrochelatase from Ralstonia nicotianae (strain ATCC BAA-1114 / GMI1000) (Ralstonia solanacearum).